Reading from the N-terminus, the 365-residue chain is Sulfotransferase 2B1 (365 aa).

70 to 75 lines the 3'-phosphoadenylyl sulfate pocket; the sequence is KSGTTW. Positions 98, 103, and 125 each coordinate substrate. His125 (proton acceptor) is an active-site residue. Residues Arg147, Ser155, Tyr210, 244–249, and 274–276 contribute to the 3'-phosphoadenylyl sulfate site; these read STFSAM and RKG. The segment at 303 to 365 is disordered; sequence GMPTFPWDED…ASETPHPRPS (63 aa). Residues 309-325 are compositionally biased toward acidic residues; sequence WDEDPEEDGSPDPEPSP. Ser348 bears the Phosphoserine mark.

It belongs to the sulfotransferase 1 family. Phosphorylated. Expressed in the stratum granulosum-stratum corneum junction in the skin (at protein level). Expressed highly in placenta, prostate and trachea and lower expression in the small intestine and lung.

The protein localises to the cytoplasm. The protein resides in the cytosol. Its subcellular location is the microsome. It localises to the nucleus. It carries out the reaction an alcohol + 3'-phosphoadenylyl sulfate = an alkyl sulfate + adenosine 3',5'-bisphosphate + H(+). The catalysed reaction is 3beta-hydroxyandrost-5-en-17-one + 3'-phosphoadenylyl sulfate = dehydroepiandrosterone 3-sulfate + adenosine 3',5'-bisphosphate + H(+). The enzyme catalyses (24S)-hydroxycholesterol + 3'-phosphoadenylyl sulfate = (24S)-hydroxycholesterol 3-sulfate + adenosine 3',5'-bisphosphate + H(+). It catalyses the reaction cholesterol + 3'-phosphoadenylyl sulfate = cholesterol sulfate + adenosine 3',5'-bisphosphate + H(+). It carries out the reaction pregnenolone + 3'-phosphoadenylyl sulfate = pregnenolone sulfate + adenosine 3',5'-bisphosphate + H(+). Its function is as follows. Sulfotransferase that utilizes 3'-phospho-5'-adenylyl sulfate (PAPS) as sulfonate donor to catalyze the sulfate conjugation. Responsible for the sulfation of cholesterol. Catalyzes sulfation of the 3beta-hydroxyl groups of steroids, such as, pregnenolone and dehydroepiandrosterone (DHEA). Preferentially sulfonates cholesterol, while it also has significant activity with pregnenolone and DHEA. Plays a role in epidermal cholesterol metabolism and in the regulation of epidermal proliferation and differentiation. Sulfonates pregnenolone but not cholesterol. The protein is Sulfotransferase 2B1 (SULT2B1) of Homo sapiens (Human).